We begin with the raw amino-acid sequence, 242 residues long: Methylthioribulose-1-phosphate dehydratase (242 aa).

Over residues 1–11 (MAQEIQKENND) the composition is skewed to basic and acidic residues. The interval 1–20 (MAQEIQKENNDHLVQSSDPE) is disordered. Position 100 (cysteine 100) interacts with substrate. Residues histidine 117 and histidine 119 each contribute to the Zn(2+) site. The active-site Proton donor/acceptor is the glutamate 146. Histidine 202 provides a ligand contact to Zn(2+).

Belongs to the aldolase class II family. MtnB subfamily. Requires Zn(2+) as cofactor.

Its subcellular location is the cytoplasm. It carries out the reaction 5-(methylsulfanyl)-D-ribulose 1-phosphate = 5-methylsulfanyl-2,3-dioxopentyl phosphate + H2O. It participates in amino-acid biosynthesis; L-methionine biosynthesis via salvage pathway; L-methionine from S-methyl-5-thio-alpha-D-ribose 1-phosphate: step 2/6. Functionally, catalyzes the dehydration of methylthioribulose-1-phosphate (MTRu-1-P) into 2,3-diketo-5-methylthiopentyl-1-phosphate (DK-MTP-1-P). This chain is Methylthioribulose-1-phosphate dehydratase, found in Aspergillus niger (strain ATCC MYA-4892 / CBS 513.88 / FGSC A1513).